The sequence spans 483 residues: Membrane-bound lytic murein transglycosylase F (483 aa).

Residues Met1–Ala18 form the signal peptide. The non-LT domain stretch occupies residues Trp19 to Leu267. Residues His269 to Glu483 form an LT domain region. The active site involves Glu312. The interval Gln458 to Glu483 is disordered. Basic and acidic residues predominate over residues Ile473–Glu483.

In the N-terminal section; belongs to the bacterial solute-binding protein 3 family. This sequence in the C-terminal section; belongs to the transglycosylase Slt family.

The protein resides in the cell outer membrane. The catalysed reaction is Exolytic cleavage of the (1-&gt;4)-beta-glycosidic linkage between N-acetylmuramic acid (MurNAc) and N-acetylglucosamine (GlcNAc) residues in peptidoglycan, from either the reducing or the non-reducing ends of the peptidoglycan chains, with concomitant formation of a 1,6-anhydrobond in the MurNAc residue.. Its function is as follows. Murein-degrading enzyme that degrades murein glycan strands and insoluble, high-molecular weight murein sacculi, with the concomitant formation of a 1,6-anhydromuramoyl product. Lytic transglycosylases (LTs) play an integral role in the metabolism of the peptidoglycan (PG) sacculus. Their lytic action creates space within the PG sacculus to allow for its expansion as well as for the insertion of various structures such as secretion systems and flagella. The polypeptide is Membrane-bound lytic murein transglycosylase F (Actinobacillus pleuropneumoniae serotype 3 (strain JL03)).